The primary structure comprises 210 residues: Signal peptidase complex catalytic subunit SEC11 (210 aa).

The Cytoplasmic segment spans residues 1–21; sequence MLAGLSPHLSNLRRSLTQVLN. Residues 22–38 form a helical; Signal-anchor for type II membrane protein membrane-spanning segment; the sequence is FALVLSTAFMMWKGLSI. The Lumenal segment spans residues 39–210; it reads YTNSSSPIVV…MGAMVILQRE (172 aa). Asn-41 is a glycosylation site (N-linked (GlcNAc...) asparagine). Active-site charge relay system residues include Ser-53, His-92, and Asp-152. The C-terminal short (CTS) helix stretch occupies residues 196-207; it reads VLLGIMGAMVIL.

It belongs to the peptidase S26B family. In terms of assembly, component of the signal peptidase complex (SPC) composed of a catalytic subunit SEC11 and three accessory subunits SPC1, SPC2 and SPC3. The complex induces a local thinning of the ER membrane which is used to measure the length of the signal peptide (SP) h-region of protein substrates. This ensures the selectivity of the complex towards h-regions shorter than 18-20 amino acids. SPC associates with the translocon complex.

Its subcellular location is the endoplasmic reticulum membrane. It carries out the reaction Cleavage of hydrophobic, N-terminal signal or leader sequences from secreted and periplasmic proteins.. In terms of biological role, catalytic component of the signal peptidase complex (SPC) which catalyzes the cleavage of N-terminal signal sequences from nascent proteins as they are translocated into the lumen of the endoplasmic reticulum. Specifically cleaves N-terminal signal peptides that contain a hydrophobic alpha-helix (h-region) shorter than 18-20 amino acids. In Coccidioides posadasii (strain C735) (Valley fever fungus), this protein is Signal peptidase complex catalytic subunit SEC11 (SEC11).